Here is a 430-residue protein sequence, read N- to C-terminus: Adenylosuccinate synthetase (430 aa).

Residues 12–18 (GDEGKGK) and 40–42 (GHT) contribute to the GTP site. Catalysis depends on Asp13, which acts as the Proton acceptor. Mg(2+) contacts are provided by Asp13 and Gly40. IMP contacts are provided by residues 13–16 (DEGK), 38–41 (NAGH), Thr128, Arg142, Gln223, Thr238, and Arg302. The Proton donor role is filled by His41. 298 to 304 (TTTGRPR) contributes to the substrate binding site. GTP is bound by residues Arg304, 330 to 332 (SID), and 412 to 414 (SVG).

This sequence belongs to the adenylosuccinate synthetase family. In terms of assembly, homodimer. Requires Mg(2+) as cofactor.

The protein resides in the cytoplasm. The catalysed reaction is IMP + L-aspartate + GTP = N(6)-(1,2-dicarboxyethyl)-AMP + GDP + phosphate + 2 H(+). It functions in the pathway purine metabolism; AMP biosynthesis via de novo pathway; AMP from IMP: step 1/2. In terms of biological role, plays an important role in the de novo pathway of purine nucleotide biosynthesis. Catalyzes the first committed step in the biosynthesis of AMP from IMP. This Streptococcus agalactiae serotype III (strain NEM316) protein is Adenylosuccinate synthetase.